Here is a 143-residue protein sequence, read N- to C-terminus: Large ribosomal subunit protein uL15 (143 aa).

The tract at residues 1-54 is disordered; that stretch reads MQLNSIKPAPGAKHPKRRVGRGIGSGLGKTAGRGHKGQKSRAGGFHKVGFEGGQ. Positions 21–31 are enriched in gly residues; the sequence is RGIGSGLGKTA.

The protein belongs to the universal ribosomal protein uL15 family. As to quaternary structure, part of the 50S ribosomal subunit.

Functionally, binds to the 23S rRNA. This Nitrosospira multiformis (strain ATCC 25196 / NCIMB 11849 / C 71) protein is Large ribosomal subunit protein uL15.